A 547-amino-acid chain; its full sequence is Flagellar hook-associated protein 1 (547 aa).

Belongs to the flagella basal body rod proteins family.

It localises to the secreted. It is found in the bacterial flagellum. The sequence is that of Flagellar hook-associated protein 1 (flgK) from Escherichia coli (strain K12).